We begin with the raw amino-acid sequence, 268 residues long: Minor capsid protein VP2 (268 aa).

Positions 132 to 144 (STPQSLGALTGRT) are enriched in polar residues. Residues 132-199 (STPQSLGALT…SLSSAARTRS (68 aa)) are disordered. Positions 145–163 (NSRVSAPARSSPSALSNAP) are enriched in low complexity. The segment covering 164-178 (TATSLHSNQTVSTRL) has biased composition (polar residues). Residues 179-195 (GSSAGSGTGVSSLSSAA) are compositionally biased toward low complexity.

The protein belongs to the norovirus VP2 family. In terms of assembly, homooligomer. The portal-like structure consists in 12 copies of VP2. Interacts with capsid protein VP1.

Its subcellular location is the virion. It is found in the host cytoplasm. In terms of biological role, minor structural protein that forms a portal-like structure at a unique three-fold axis of symmetry, following binding to the host receptor. The channel formed by VP2 may allow the delivery of the viral genome through the host endosomal membrane. This Lordsdale virus (strain GII/Human/United Kingdom/Lordsdale/1993) (Human enteric calicivirus) protein is Minor capsid protein VP2.